The chain runs to 487 residues: Protein nucleotidyltransferase YdiU (487 aa).

ATP contacts are provided by G91, G93, R94, K114, D126, G127, R177, and R184. The active-site Proton acceptor is the D253. 2 residues coordinate Mg(2+): N254 and D263. Position 263 (D263) interacts with ATP.

It belongs to the SELO family. Mg(2+) is required as a cofactor. Mn(2+) serves as cofactor.

The enzyme catalyses L-seryl-[protein] + ATP = 3-O-(5'-adenylyl)-L-seryl-[protein] + diphosphate. The catalysed reaction is L-threonyl-[protein] + ATP = 3-O-(5'-adenylyl)-L-threonyl-[protein] + diphosphate. It catalyses the reaction L-tyrosyl-[protein] + ATP = O-(5'-adenylyl)-L-tyrosyl-[protein] + diphosphate. It carries out the reaction L-histidyl-[protein] + UTP = N(tele)-(5'-uridylyl)-L-histidyl-[protein] + diphosphate. The enzyme catalyses L-seryl-[protein] + UTP = O-(5'-uridylyl)-L-seryl-[protein] + diphosphate. The catalysed reaction is L-tyrosyl-[protein] + UTP = O-(5'-uridylyl)-L-tyrosyl-[protein] + diphosphate. Functionally, nucleotidyltransferase involved in the post-translational modification of proteins. It can catalyze the addition of adenosine monophosphate (AMP) or uridine monophosphate (UMP) to a protein, resulting in modifications known as AMPylation and UMPylation. This chain is Protein nucleotidyltransferase YdiU, found in Yersinia pestis (strain Pestoides F).